The chain runs to 130 residues: Small ribosomal subunit protein uS9 (130 aa).

A disordered region spans residues 111–130; sequence VERKKPGLKKARKASQFSKR. Over residues 116-130 the composition is skewed to basic residues; sequence PGLKKARKASQFSKR.

The protein belongs to the universal ribosomal protein uS9 family.

This Lactococcus lactis subsp. lactis (strain IL1403) (Streptococcus lactis) protein is Small ribosomal subunit protein uS9.